The sequence spans 1755 residues: Transposon Ty1-ML2 Gag-Pol polyprotein (1755 aa).

Residues 1 to 16 (MESQQLSQHSHISHGS) show a composition bias toward low complexity. 3 disordered regions span residues 1-93 (MESQ…MMTQ), 126-173 (PQSQ…RPPP), and 352-421 (GSRN…SKST). 2 stretches are compositionally biased toward polar residues: residues 48 to 60 (TKAN…TPAS) and 127 to 152 (QSQF…GNTF). A compositionally biased stretch (low complexity) spans 153–165 (TDSSSADSDMTST). The tract at residues 299-401 (NNGIHINNKV…NSKSKTARAH (103 aa)) is RNA-binding. Positions 402 to 418 (NVSTSNNSPSTDNDSIS) are enriched in low complexity. S416 carries the phosphoserine modification. Residue D461 is the For protease activity; shared with dimeric partner of the active site. Residues 583 to 640 (NVHTSESTRKYPYPFIHRMLAHANAQTIRYSLKNNTITYFNESDVDRSSAIDYQCPDC) are integrase-type zinc finger-like. One can recognise an Integrase catalytic domain in the interval 660-835 (NSYEPFQYLH…AGLDISTLLP (176 aa)). 2 residues coordinate Mg(2+): D671 and D736. 3 disordered regions span residues 956 to 1087 (SKAV…ETEK), 1092 to 1111 (RSPS…NIVP), and 1130 to 1171 (DLPL…DSNA). The segment covering 960–969 (SPTDSTPPST) has biased composition (low complexity). Residues 1005 to 1015 (STPQISNIEST) are compositionally biased toward polar residues. A compositionally biased stretch (basic and acidic residues) spans 1038–1053 (ESSHASKSKDFRHSDS). 2 stretches are compositionally biased toward polar residues: residues 1054-1082 (YSEN…QISD) and 1101-1111 (PENNSSHNIVP). A Bipartite nuclear localization signal motif is present at residues 1178-1212 (KKRSLEDNETEIKVSRDTWNTKNMRSLEPPRSKKR). The Reverse transcriptase Ty1/copia-type domain maps to 1338-1476 (NNYYITQLDI…DILGLEIKYQ (139 aa)). Mg(2+) contacts are provided by D1346, D1427, D1428, D1610, E1652, and D1685. The 143-residue stretch at 1610–1752 (DASYGNQPYY…IKTFKLLTNK (143 aa)) folds into the RNase H Ty1/copia-type domain.

As to quaternary structure, the capsid protein forms a homotrimer, from which the VLPs are assembled. The protease is a homodimer, whose active site consists of two apposed aspartic acid residues. In terms of processing, initially, virus-like particles (VLPs) are composed of the structural unprocessed proteins Gag and Gag-Pol, and also contain the host initiator methionine tRNA (tRNA(i)-Met) which serves as a primer for minus-strand DNA synthesis, and a dimer of genomic Ty RNA. Processing of the polyproteins occurs within the particle and proceeds by an ordered pathway, called maturation. First, the protease (PR) is released by autocatalytic cleavage of the Gag-Pol polyprotein yielding capsid protein p45 and a Pol-p154 precursor protein. This cleavage is a prerequisite for subsequent processing of Pol-p154 at the remaining sites to release the mature structural and catalytic proteins. Maturation takes place prior to the RT reaction and is required to produce transposition-competent VLPs.

The protein localises to the cytoplasm. The protein resides in the nucleus. The catalysed reaction is DNA(n) + a 2'-deoxyribonucleoside 5'-triphosphate = DNA(n+1) + diphosphate. It carries out the reaction Endonucleolytic cleavage to 5'-phosphomonoester.. Capsid protein (CA) is the structural component of the virus-like particle (VLP), forming the shell that encapsulates the retrotransposons dimeric RNA genome. The particles are assembled from trimer-clustered units and there are holes in the capsid shells that allow for the diffusion of macromolecules. CA also has nucleocapsid-like chaperone activity, promoting primer tRNA(i)-Met annealing to the multipartite primer-binding site (PBS), dimerization of Ty1 RNA and initiation of reverse transcription. Functionally, the aspartyl protease (PR) mediates the proteolytic cleavages of the Gag and Gag-Pol polyproteins after assembly of the VLP. Its function is as follows. Reverse transcriptase/ribonuclease H (RT) is a multifunctional enzyme that catalyzes the conversion of the retro-elements RNA genome into dsDNA within the VLP. The enzyme displays a DNA polymerase activity that can copy either DNA or RNA templates, and a ribonuclease H (RNase H) activity that cleaves the RNA strand of RNA-DNA heteroduplexes during plus-strand synthesis and hydrolyzes RNA primers. The conversion leads to a linear dsDNA copy of the retrotransposon that includes long terminal repeats (LTRs) at both ends. In terms of biological role, integrase (IN) targets the VLP to the nucleus, where a subparticle preintegration complex (PIC) containing at least integrase and the newly synthesized dsDNA copy of the retrotransposon must transit the nuclear membrane. Once in the nucleus, integrase performs the integration of the dsDNA into the host genome. The sequence is that of Transposon Ty1-ML2 Gag-Pol polyprotein (TY1B-ML2) from Saccharomyces cerevisiae (strain ATCC 204508 / S288c) (Baker's yeast).